A 399-amino-acid polypeptide reads, in one-letter code: Alpha-tubulin N-acetyltransferase (399 aa).

In terms of domain architecture, N-acetyltransferase spans 1–178 (MEFNFIINKL…NNFVVFDQYF (178 aa)). Acetyl-CoA-binding positions include 112-125 (FYVH…GYGK) and 148-157 (SPKLIAFLKK). Residues 183-193 (SSQNKQNQNTR) are compositionally biased toward polar residues. The tract at residues 183-223 (SSQNKQNQNTRSYSQPYSDYSSQIPTNYPQQQQQQSNSKSY) is disordered. The segment covering 194–223 (SYSQPYSDYSSQIPTNYPQQQQQQSNSKSY) has biased composition (low complexity).

The protein belongs to the acetyltransferase ATAT1 family.

It carries out the reaction L-lysyl-[alpha-tubulin] + acetyl-CoA = N(6)-acetyl-L-lysyl-[alpha-tubulin] + CoA + H(+). Its function is as follows. Specifically acetylates 'Lys-40' in alpha-tubulin on the lumenal side of microtubules. Promotes microtubule destabilization and accelerates microtubule dynamics; this activity may be independent of acetylation activity. Acetylates alpha-tubulin with a slow enzymatic rate, due to a catalytic site that is not optimized for acetyl transfer. Enters the microtubule through each end and diffuses quickly throughout the lumen of microtubules. Acetylates only long/old microtubules because of its slow acetylation rate since it does not have time to act on dynamically unstable microtubules before the enzyme is released. The sequence is that of Alpha-tubulin N-acetyltransferase from Tetrahymena thermophila (strain SB210).